A 737-amino-acid polypeptide reads, in one-letter code: MATKFPSFSQGLAQDPTTRRIWYGIATAHDFESHDGMTEERLYQKLFSTHFGHLAIIGLWVSGNLFHIAWQGNFEQWVADPLHVRPIAHAIWDPHFGQGAIDAFTQAGASSPVNIAFSGLYHWWYTIGMRTNAELYQGSIFMMILSAWALFAGWLHLQPKFRPSLAWFKNAESRLNHHLAVLFGFSSIAWTGHLVHVAIPEARGQHVGWDNFLNVLPHPAGLGPFFTGNWGVYAENPDSLNQAFGSADGAGTAILTFLGGFHPQSEALWLTDIAHHHLAIGCIFVIAGHMYRTNFGIGHSIKEILETHNPPKGTPGDLGAGHKGLYDTINNSLHFQLGLALASLGVVTSLVAQHMYSMPSYAFIAKDYTTQAALYTHHQYIAIALMCGAFAHGAIFFIRDYDPEANKDNVLARMLEHKEAIISHLSWVSLFLGFHTLGLYVHNDVVVSFGTPEKQILVEPVFAQFVQAASGKAMYGMDVLLSNASSSASLAAQNIPGDHYWLDAINGNTDVFLPIGPGDFLVHHAIALGLHTTTLILVKGALDARGSKLMPDKKDFGYSFPCDGPGRGGTCDISAWDAFYLAVFWALNTVGWVTFYWHWKHLAIWSGNVAQFNESSTYLMGWFRDYLWLNSSQLINGYNPFGSNNLAVWAWMFLFGHLVWATGFMFLISWRGYWQELIETIVWAHQRSPIANMMGWRDKPVALSIVQARVVGLAHFSVGYVLTYAAFLIASTSGKFG.

8 consecutive transmembrane segments (helical) span residues 46 to 69 (LFST…FHIA), 135 to 158 (LYQG…LHLQ), 175 to 199 (LNHH…HVAI), 273 to 291 (IAHH…GHMY), 333 to 356 (LHFQ…QHMY), 372 to 398 (AALY…IFFI), 420 to 442 (AIIS…LYVH), and 520 to 538 (FLVH…LILV). 2 residues coordinate [4Fe-4S] cluster: Cys562 and Cys571. 2 helical membrane-spanning segments follow: residues 578–599 (AFYL…YWHW) and 646–668 (LAVW…MFLI). Residues His657, Met665, and Tyr673 each contribute to the chlorophyll a site. Residue Trp674 coordinates phylloquinone. Residues 710 to 730 (VVGLAHFSVGYVLTYAAFLIA) form a helical membrane-spanning segment.

Belongs to the PsaA/PsaB family. As to quaternary structure, the PsaA/B heterodimer binds the P700 chlorophyll special pair and subsequent electron acceptors. PSI consists of a core antenna complex that captures photons, and an electron transfer chain that converts photonic excitation into a charge separation. The cyanobacterial PSI reaction center is composed of one copy each of PsaA,B,C,D,E,F,I,J,K,L,M and X, and forms trimeric complexes. PSI electron transfer chain: 5 chlorophyll a, 1 chlorophyll a', 2 phylloquinones and 3 4Fe-4S clusters. PSI core antenna: 90 chlorophyll a, 22 carotenoids, 3 phospholipids and 1 galactolipid. P700 is a chlorophyll a/chlorophyll a' dimer, A0 is one or more chlorophyll a, A1 is one or both phylloquinones and FX is a shared 4Fe-4S iron-sulfur center. serves as cofactor.

Its subcellular location is the cellular thylakoid membrane. It carries out the reaction reduced [plastocyanin] + hnu + oxidized [2Fe-2S]-[ferredoxin] = oxidized [plastocyanin] + reduced [2Fe-2S]-[ferredoxin]. PsaA and PsaB bind P700, the primary electron donor of photosystem I (PSI), as well as the electron acceptors A0, A1 and FX. PSI is a plastocyanin/cytochrome c6-ferredoxin oxidoreductase, converting photonic excitation into a charge separation, which transfers an electron from the donor P700 chlorophyll pair to the spectroscopically characterized acceptors A0, A1, FX, FA and FB in turn. Oxidized P700 is reduced on the lumenal side of the thylakoid membrane by plastocyanin or cytochrome c6. The sequence is that of Photosystem I P700 chlorophyll a apoprotein A2 from Parasynechococcus marenigrum (strain WH8102).